A 239-amino-acid polypeptide reads, in one-letter code: tRNA (guanine-N(7)-)-methyltransferase (239 aa).

Positions 69, 94, 121, and 144 each coordinate S-adenosyl-L-methionine. Asp144 is an active-site residue. Substrate is bound by residues Lys148, Asp180, and 217–220 (TNFE).

The protein belongs to the class I-like SAM-binding methyltransferase superfamily. TrmB family. Monomer.

It carries out the reaction guanosine(46) in tRNA + S-adenosyl-L-methionine = N(7)-methylguanosine(46) in tRNA + S-adenosyl-L-homocysteine. The protein operates within tRNA modification; N(7)-methylguanine-tRNA biosynthesis. Its function is as follows. Catalyzes the formation of N(7)-methylguanine at position 46 (m7G46) in tRNA. This is tRNA (guanine-N(7)-)-methyltransferase from Buchnera aphidicola subsp. Schizaphis graminum (strain Sg).